We begin with the raw amino-acid sequence, 446 residues long: Phosphoglucosamine mutase (446 aa).

Serine 102 (phosphoserine intermediate) is an active-site residue. Mg(2+)-binding residues include serine 102, aspartate 241, aspartate 243, and aspartate 245. At serine 102 the chain carries Phosphoserine.

This sequence belongs to the phosphohexose mutase family. The cofactor is Mg(2+). In terms of processing, activated by phosphorylation.

The enzyme catalyses alpha-D-glucosamine 1-phosphate = D-glucosamine 6-phosphate. Catalyzes the conversion of glucosamine-6-phosphate to glucosamine-1-phosphate. This Idiomarina loihiensis (strain ATCC BAA-735 / DSM 15497 / L2-TR) protein is Phosphoglucosamine mutase.